Here is a 298-residue protein sequence, read N- to C-terminus: Short-chain dehydrogenase/reductase prx6 (298 aa).

Residues isoleucine 27, aspartate 70, asparagine 97, tyrosine 174, lysine 178, valine 208, and threonine 210 each coordinate NADP(+). Residue tyrosine 174 is the Proton acceptor of the active site. Residue lysine 178 is the Lowers pKa of active site Tyr of the active site.

The protein belongs to the short-chain dehydrogenases/reductases (SDR) family.

The protein operates within sesquiterpene biosynthesis. In terms of biological role, short-chain dehydrogenase/reductase; part of the gene cluster that mediates the biosynthesis of PR-toxin, a bicyclic sesquiterpene belonging to the eremophilane class and acting as a mycotoxin. The first step of the pathway is catalyzed by the aristolochene synthase which performs the cyclization of trans,trans-farnesyl diphosphate (FPP) to the bicyclic sesquiterpene aristolochene. Following the formation of aristolochene, the non-oxygenated aristolochene is converted to the trioxygenated intermediate eremofortin B, via 7-epi-neopetasone. This conversion appears to involve three enzymes, a hydroxysterol oxidase-like enzyme, the quinone-oxidase prx3 that forms the quinone-type-structure in the bicyclic nucleus of aristolochene with the C8-oxo group and the C-3 hydroxyl group, and the P450 monooxygenase prx9 that introduces the epoxide at the double bond between carbons 1 and 2. No monoxy or dioxy-intermediates have been reported to be released to the broth, so these three early oxidative reactions may be coupled together. Eremofortin B is further oxidized by another P450 monooxygenase, that introduces a second epoxide between carbons 7 and 11 prior to acetylation to eremofortin A by the acetyltransferase prx11. The second epoxidation may be performed by a second P450 monooxygenase. After the acetylation step, eremofortin A is converted to eremofortin C and then to PR-toxin. First the conversion of eremofortin A to eremofortin C proceeds by oxidation of the side chain of the molecule at C-12 and is catalyzed by the short-chain oxidoreductase prx1. The cytochrome P450 monooxygenase prx8 also plays a role in this step. The primary alcohol formed at C-12 is finally oxidized by the short-chain alcohol dehydrogenase prx4 that forms PR-toxin. In Penicillium rubens (strain ATCC 28089 / DSM 1075 / NRRL 1951 / Wisconsin 54-1255) (Penicillium chrysogenum), this protein is Short-chain dehydrogenase/reductase prx6.